A 107-amino-acid chain; its full sequence is Early E3A 12.5 kDa protein (107 aa).

The protein belongs to the adenoviridae E3A-2 family.

Functionally, not yet known. In Human adenovirus C serotype 5 (HAdV-5), this protein is Early E3A 12.5 kDa protein.